The following is a 341-amino-acid chain: N-acetyl-gamma-glutamyl-phosphate reductase (341 aa).

Cys-151 is a catalytic residue.

This sequence belongs to the NAGSA dehydrogenase family. Type 1 subfamily.

The protein localises to the cytoplasm. The enzyme catalyses N-acetyl-L-glutamate 5-semialdehyde + phosphate + NADP(+) = N-acetyl-L-glutamyl 5-phosphate + NADPH + H(+). The protein operates within amino-acid biosynthesis; L-arginine biosynthesis; N(2)-acetyl-L-ornithine from L-glutamate: step 3/4. Functionally, catalyzes the NADPH-dependent reduction of N-acetyl-5-glutamyl phosphate to yield N-acetyl-L-glutamate 5-semialdehyde. The protein is N-acetyl-gamma-glutamyl-phosphate reductase of Chlorobaculum tepidum (strain ATCC 49652 / DSM 12025 / NBRC 103806 / TLS) (Chlorobium tepidum).